A 337-amino-acid polypeptide reads, in one-letter code: Acetyl-coenzyme A synthetase (337 aa).

Residues 131–134, Thr-249, and Asn-273 contribute to the CoA site; that span reads RGGR. 325–327 lines the ATP pocket; it reads GEP.

It belongs to the ATP-dependent AMP-binding enzyme family. The cofactor is Mg(2+). Acetylated. Deacetylation by the SIR2-homolog deacetylase activates the enzyme.

The catalysed reaction is acetate + ATP + CoA = acetyl-CoA + AMP + diphosphate. Catalyzes the conversion of acetate into acetyl-CoA (AcCoA), an essential intermediate at the junction of anabolic and catabolic pathways. AcsA undergoes a two-step reaction. In the first half reaction, AcsA combines acetate with ATP to form acetyl-adenylate (AcAMP) intermediate. In the second half reaction, it can then transfer the acetyl group from AcAMP to the sulfhydryl group of CoA, forming the product AcCoA. The polypeptide is Acetyl-coenzyme A synthetase (acsA) (Nostoc linckia).